The following is a 488-amino-acid chain: Bifunctional protein GlmU (488 aa).

The tract at residues 1 to 237 (MPRTRTPLAA…VEEASGVNDR (237 aa)) is pyrophosphorylase. UDP-N-acetyl-alpha-D-glucosamine is bound by residues 13–16 (LAAG), lysine 27, glutamine 82, 87–88 (GT), 110–112 (SGD), glycine 149, glutamate 164, asparagine 179, and asparagine 235. Residue aspartate 112 coordinates Mg(2+). A Mg(2+)-binding site is contributed by asparagine 235. The tract at residues 238 to 258 (VELSRANRVMVGRLAEAFMRA) is linker. Positions 259–488 (GVTIEDPARF…KGRPAARRAS (230 aa)) are N-acetyltransferase. Arginine 341 and lysine 359 together coordinate UDP-N-acetyl-alpha-D-glucosamine. Catalysis depends on histidine 371, which acts as the Proton acceptor. Residues tyrosine 374 and asparagine 385 each contribute to the UDP-N-acetyl-alpha-D-glucosamine site. Residues alanine 388, 394–395 (NY), serine 413, alanine 431, and arginine 448 contribute to the acetyl-CoA site. A disordered region spans residues 459 to 488 (AQRQAEKQMKGTATGPASARKGRPAARRAS). Positions 478–488 (RKGRPAARRAS) are enriched in basic residues.

It in the N-terminal section; belongs to the N-acetylglucosamine-1-phosphate uridyltransferase family. In the C-terminal section; belongs to the transferase hexapeptide repeat family. As to quaternary structure, homotrimer. The cofactor is Mg(2+).

It localises to the cytoplasm. It carries out the reaction alpha-D-glucosamine 1-phosphate + acetyl-CoA = N-acetyl-alpha-D-glucosamine 1-phosphate + CoA + H(+). The enzyme catalyses N-acetyl-alpha-D-glucosamine 1-phosphate + UTP + H(+) = UDP-N-acetyl-alpha-D-glucosamine + diphosphate. The protein operates within nucleotide-sugar biosynthesis; UDP-N-acetyl-alpha-D-glucosamine biosynthesis; N-acetyl-alpha-D-glucosamine 1-phosphate from alpha-D-glucosamine 6-phosphate (route II): step 2/2. It functions in the pathway nucleotide-sugar biosynthesis; UDP-N-acetyl-alpha-D-glucosamine biosynthesis; UDP-N-acetyl-alpha-D-glucosamine from N-acetyl-alpha-D-glucosamine 1-phosphate: step 1/1. It participates in bacterial outer membrane biogenesis; LPS lipid A biosynthesis. Its function is as follows. Catalyzes the last two sequential reactions in the de novo biosynthetic pathway for UDP-N-acetylglucosamine (UDP-GlcNAc). The C-terminal domain catalyzes the transfer of acetyl group from acetyl coenzyme A to glucosamine-1-phosphate (GlcN-1-P) to produce N-acetylglucosamine-1-phosphate (GlcNAc-1-P), which is converted into UDP-GlcNAc by the transfer of uridine 5-monophosphate (from uridine 5-triphosphate), a reaction catalyzed by the N-terminal domain. The polypeptide is Bifunctional protein GlmU (Anaeromyxobacter sp. (strain K)).